The sequence spans 416 residues: cAMP-dependent protein kinase type II-beta regulatory subunit (416 aa).

The segment at 2–151 (SIEIPAGLTE…RLQEACKDIL (150 aa)) is dimerization and phosphorylation. Residues 53-97 (HEGRTWGDAGAAAGGGTPSKGVNFAEEPMRSDSENGEEEEAAEAG) form a disordered region. Phosphothreonine is present on threonine 69. Residues serine 83, serine 85, and serine 112 each carry the phosphoserine modification. 3',5'-cyclic AMP contacts are provided by residues 152 to 273 (LFKN…ESLP), glutamate 221, arginine 230, 274 to 416 (FLKS…EPTA), glutamate 350, and arginine 359.

The protein belongs to the cAMP-dependent kinase regulatory chain family. The inactive form of the enzyme is composed of two regulatory chains and two catalytic chains. Activation by cAMP produces two active catalytic monomers and a regulatory dimer that binds four cAMP molecules. Interacts with PRKACA and PRKACB. Interacts with the phosphorylated form of PJA2. Forms a complex composed of PRKAR2B, GSK3B and GSKIP through GSKIP interaction; facilitates PKA-induced phosphorylation and regulates GSK3B activity. Post-translationally, phosphorylated by the activated catalytic chain. As to expression, four types of regulatory chains are found: I-alpha, I-beta, II-alpha, and II-beta. Their expression varies among tissues and is in some cases constitutive and in others inducible. Brain. Present in a few pyramidal neurons and mostly in mossy fibers. Colocalizes with PJA2 in dentate granule cells and at postsynaptic sites of primary hippocampal neurons.

The protein resides in the cytoplasm. It localises to the cell membrane. Regulatory subunit of the cAMP-dependent protein kinases involved in cAMP signaling in cells. Type II regulatory chains mediate membrane association by binding to anchoring proteins, including the MAP2 kinase. This chain is cAMP-dependent protein kinase type II-beta regulatory subunit (Prkar2b), found in Rattus norvegicus (Rat).